The following is a 51-amino-acid chain: U-Asilidin(1)-Mar1a (51 aa).

Positions 1–23 (MANYIEVFSVLAIIFATVLAALA) are cleaved as a signal peptide. 3 disulfides stabilise this stretch: cysteine 26–cysteine 40, cysteine 33–cysteine 44, and cysteine 39–cysteine 49.

It belongs to the asilidin-1 family. In terms of tissue distribution, expressed by the venom gland. Is the most highly expressed peptide and is around 3000 times higher expressed in the thoracic glands compared to its body tissues.

It is found in the secreted. Functionally, induces neurotoxic effect on honeybees, including slow movements, disorientation and paralysis. Since it provokes similar symptoms than omega-atracotoxin, it is probable that it acts in the same way by inhibiting voltage-gated calcium channels. In Machimus arthriticus (Breck robberfly), this protein is U-Asilidin(1)-Mar1a.